Here is a 663-residue protein sequence, read N- to C-terminus: Beta-galactosidase YesZ (663 aa).

R107 serves as a coordination point for substrate. C111 is a binding site for Zn(2+). N145 is a binding site for substrate. E146 acts as the Proton donor in catalysis. 3 residues coordinate Zn(2+): C154, C156, and C159. E297 functions as the Nucleophile in the catalytic mechanism. 346 to 349 (EQPH) contacts substrate.

This sequence belongs to the glycosyl hydrolase 42 family. Homotrimer.

The catalysed reaction is Hydrolysis of terminal non-reducing beta-D-galactose residues in beta-D-galactosides.. Functionally, may play a role in the degradation of rhamnogalacturonan derived from plant cell walls. The protein is Beta-galactosidase YesZ (yesZ) of Bacillus licheniformis (strain ATCC 14580 / DSM 13 / JCM 2505 / CCUG 7422 / NBRC 12200 / NCIMB 9375 / NCTC 10341 / NRRL NRS-1264 / Gibson 46).